The following is a 512-amino-acid chain: MALAKTIMIQGTSSHVGKSLLCTALCRIFKQDGFHVAPFKAQNMALNSYVTLTGGEIGRAQGAQAEAAGIAATVTMNPVLIKPKQDLNAQVVVLGKPLADMSARDYRANFLPKAVNLVGQCIEELRREFQVLVIEGAGSPAEINLKDRDIVNMRTAILADAPVILVADIDRGGVFASLVGTLELLEPHERQRVAGFIINKFRGDIELLKPGLEFLEQRTGKPVLGVIPYLHEHGIEQEDSVALEGNKNVSSGSEIDIAVVKLPRISNFTDFDLIGRVPGICLRFVCPGDPMGTPEAVILPGTKNTIEDLQYLKEKGTDQEIIELARKGIPVVGICGGYQMLGKMLYDPWGTEASLESITGLGLLDIETTFFKEKQTHRCKAKITCTELNWCGITNQEITGYEIHTGQVKLGREAKPLLQITQRSGNIVALPDGAVGNQGHIWGTHLHGLFDNKALLLSWVNSLRERKGLSRLTLAKLPDNREEKYDNLAEAVRHHLNMKQLHQMMGLGEGKP.

A GATase cobBQ-type domain is found at 254–455 (EIDIAVVKLP…LHGLFDNKAL (202 aa)). Cys335 (nucleophile) is an active-site residue. His447 is an active-site residue.

It belongs to the CobB/CobQ family. CobQ subfamily.

Its pathway is cofactor biosynthesis; adenosylcobalamin biosynthesis. Catalyzes amidations at positions B, D, E, and G on adenosylcobyrinic A,C-diamide. NH(2) groups are provided by glutamine, and one molecule of ATP is hydrogenolyzed for each amidation. The protein is Cobyric acid synthase of Desulforamulus reducens (strain ATCC BAA-1160 / DSM 100696 / MI-1) (Desulfotomaculum reducens).